A 184-amino-acid chain; its full sequence is Ribosome-recycling factor (184 aa).

This sequence belongs to the RRF family.

It is found in the cytoplasm. Functionally, responsible for the release of ribosomes from messenger RNA at the termination of protein biosynthesis. May increase the efficiency of translation by recycling ribosomes from one round of translation to another. The protein is Ribosome-recycling factor of Acholeplasma laidlawii (strain PG-8A).